We begin with the raw amino-acid sequence, 705 residues long: Elongation factor G (705 aa).

Positions 8 to 290 (AYYRNIGISA…AVIEYLPAPT (283 aa)) constitute a tr-type G domain. Residues 17-24 (AHIDAGKT), 88-92 (DTPGH), and 142-145 (NKMD) contribute to the GTP site.

The protein belongs to the TRAFAC class translation factor GTPase superfamily. Classic translation factor GTPase family. EF-G/EF-2 subfamily.

The protein localises to the cytoplasm. In terms of biological role, catalyzes the GTP-dependent ribosomal translocation step during translation elongation. During this step, the ribosome changes from the pre-translocational (PRE) to the post-translocational (POST) state as the newly formed A-site-bound peptidyl-tRNA and P-site-bound deacylated tRNA move to the P and E sites, respectively. Catalyzes the coordinated movement of the two tRNA molecules, the mRNA and conformational changes in the ribosome. This is Elongation factor G from Baumannia cicadellinicola subsp. Homalodisca coagulata.